A 61-amino-acid polypeptide reads, in one-letter code: Large ribosomal subunit protein eL24 (61 aa).

Cys7, Cys10, Cys33, and Cys37 together coordinate Zn(2+). The C4-type zinc finger occupies 7-37 (CTYCGRSIEPGTGLMYVKNDGSVLWFCSSKC).

This sequence belongs to the eukaryotic ribosomal protein eL24 family. As to quaternary structure, part of the 50S ribosomal subunit. Forms a cluster with proteins L3 and L14. It depends on Zn(2+) as a cofactor.

Binds to the 23S rRNA. This Hyperthermus butylicus (strain DSM 5456 / JCM 9403 / PLM1-5) protein is Large ribosomal subunit protein eL24.